We begin with the raw amino-acid sequence, 149 residues long: SKP1-like protein 14 (149 aa).

The segment at 91 to 149 is interaction with the F-box domain of F-box proteins; the sequence is LLAANYLNIKGLLDLSAQTVADRIKDKTPEEIREIFNIENDFTPEEEAAVRKENAWAFE.

Belongs to the SKP1 family. Part of a SCF (SKP1-cullin-F-box) protein ligase complex. Interacts with CPR1/CPR30, At3g61590, At4g39550 and At5g49610. As to expression, restricted to inflorescences, pollen and leaves.

The protein resides in the nucleus. It functions in the pathway protein modification; protein ubiquitination. In terms of biological role, involved in ubiquitination and subsequent proteasomal degradation of target proteins. Together with CUL1, RBX1 and a F-box protein, it forms a SCF E3 ubiquitin ligase complex. The functional specificity of this complex depends on the type of F-box protein. In the SCF complex, it serves as an adapter that links the F-box protein to CUL1. The polypeptide is SKP1-like protein 14 (ASK14) (Arabidopsis thaliana (Mouse-ear cress)).